The following is a 393-amino-acid chain: NAD(P)H-quinone oxidoreductase subunit H, chloroplastic (393 aa).

Belongs to the complex I 49 kDa subunit family. NDH is composed of at least 16 different subunits, 5 of which are encoded in the nucleus.

Its subcellular location is the plastid. It localises to the chloroplast thylakoid membrane. The enzyme catalyses a plastoquinone + NADH + (n+1) H(+)(in) = a plastoquinol + NAD(+) + n H(+)(out). It catalyses the reaction a plastoquinone + NADPH + (n+1) H(+)(in) = a plastoquinol + NADP(+) + n H(+)(out). NDH shuttles electrons from NAD(P)H:plastoquinone, via FMN and iron-sulfur (Fe-S) centers, to quinones in the photosynthetic chain and possibly in a chloroplast respiratory chain. The immediate electron acceptor for the enzyme in this species is believed to be plastoquinone. Couples the redox reaction to proton translocation, and thus conserves the redox energy in a proton gradient. The polypeptide is NAD(P)H-quinone oxidoreductase subunit H, chloroplastic (Phaseolus vulgaris (Kidney bean)).